Here is a 427-residue protein sequence, read N- to C-terminus: Enolase (427 aa).

Gln163 contributes to the (2R)-2-phosphoglycerate binding site. Glu205 (proton donor) is an active-site residue. Positions 242, 285, and 312 each coordinate Mg(2+). Lys337, Arg366, Ser367, and Lys388 together coordinate (2R)-2-phosphoglycerate. Lys337 serves as the catalytic Proton acceptor.

This sequence belongs to the enolase family. The cofactor is Mg(2+).

The protein resides in the cytoplasm. It localises to the secreted. It is found in the cell surface. It carries out the reaction (2R)-2-phosphoglycerate = phosphoenolpyruvate + H2O. Its pathway is carbohydrate degradation; glycolysis; pyruvate from D-glyceraldehyde 3-phosphate: step 4/5. Catalyzes the reversible conversion of 2-phosphoglycerate (2-PG) into phosphoenolpyruvate (PEP). It is essential for the degradation of carbohydrates via glycolysis. The protein is Enolase of Ralstonia nicotianae (strain ATCC BAA-1114 / GMI1000) (Ralstonia solanacearum).